Reading from the N-terminus, the 295-residue chain is tRNA pseudouridine synthase A (295 aa).

Asp-67 serves as the catalytic Nucleophile. Residue Tyr-125 coordinates substrate.

It belongs to the tRNA pseudouridine synthase TruA family. Homodimer.

It carries out the reaction uridine(38/39/40) in tRNA = pseudouridine(38/39/40) in tRNA. In terms of biological role, formation of pseudouridine at positions 38, 39 and 40 in the anticodon stem and loop of transfer RNAs. This chain is tRNA pseudouridine synthase A, found in Prochlorococcus marinus (strain MIT 9303).